The primary structure comprises 500 residues: Pentatricopeptide repeat-containing protein At1g06580 (500 aa).

PPR repeat units follow at residues 78-112 (SIVD…GISH), 113-147 (DLYS…GFEP), 148-182 (SIVT…GYEP), 183-217 (NVVI…GIRP), 218-252 (DVVT…GISP), 253-287 (DVIT…SVNP), 288-322 (NIVT…GFFP), 323-357 (NAVT…GVDG), 358-392 (DTFT…GVHP), 393-427 (DMYT…KTVV), 428-462 (GIIT…GVSP), and 463-498 (DVIT…GLMP).

The protein belongs to the PPR family. P subfamily.

The sequence is that of Pentatricopeptide repeat-containing protein At1g06580 from Arabidopsis thaliana (Mouse-ear cress).